We begin with the raw amino-acid sequence, 936 residues long: Pre-rRNA-processing protein FHL1 (936 aa).

Disordered regions lie at residues M1–L90 and D139–T169. Residues E9 to S29 show a composition bias toward polar residues. Phosphoserine is present on S44. Residues D139–I150 are compositionally biased toward basic and acidic residues. S228 bears the Phosphoserine mark. A phosphothreonine mark is found at T230 and T247. The segment covering P243 to E257 has biased composition (polar residues). The interval P243–S270 is disordered. Phosphoserine is present on S264. The 58-residue stretch at A300 to V357 folds into the FHA domain. Over residues E384–E395 the composition is skewed to basic and acidic residues. Residues E384–P442 are disordered. Residues S416 to Q430 show a composition bias toward basic residues. The fork-head DNA-binding region spans T460–I552. Residues A718–L936 form a disordered region. Composition is skewed to polar residues over residues S742–N753 and D765–Q777. Low complexity-rich tracts occupy residues A779–S795 and E815–E853. Acidic residues predominate over residues S854–E863. Positions V864–D911 are enriched in basic and acidic residues.

It localises to the nucleus. Functionally, acts as a transcriptional regulator that recruits coactivator IFH1 to the promoters of ribosomal protein genes. Recruited to ribosomal gene promoters by RAP1. In Saccharomyces cerevisiae (strain ATCC 204508 / S288c) (Baker's yeast), this protein is Pre-rRNA-processing protein FHL1 (FHL1).